The following is a 367-amino-acid chain: Porin Omp2a (367 aa).

The first 22 residues, 1-22 (MNIKSLLLGSAAALVAASGAQA), serve as a signal peptide directing secretion.

The protein belongs to the alphaproteobacteria porin family. In terms of assembly, monomer.

The protein resides in the cell outer membrane. Forms passive diffusion pores that allow small molecular weight hydrophilic materials across the outer membrane. The sequence is that of Porin Omp2a (omp2a) from Brucella suis.